The primary structure comprises 140 residues: NTF2-related export protein 1 (140 aa).

Ala2 is subject to N-acetylalanine. The NTF2 domain occupies 16-135 (AAEEFVNVYY…WKIASDCFRF (120 aa)).

In terms of assembly, heterodimer with NXF1. Forms a complex with RANGAP1, RANBP2/NUP358 and NXF1. Interacts (via NTF2 domain) with NXF1. Stabilizes the NTF2 domain of NXF1 by heterodimerization. The formation of NXF1-NXT1 heterodimers is required for the NXF1-mediated nuclear mRNA export. Preferentially binds Ran-GTP. Associates with NXF2, NXF3 and NXF5. Does not bind nucleoporins (NPC) directly, its association to NPC is mediated by NXF1.

It localises to the nucleus. The protein resides in the nucleus speckle. The protein localises to the cytoplasm. Stimulator of protein export for NES-containing proteins. Also plays a role in the nuclear export of U1 snRNA, tRNA, and mRNA. The NXF1-NXT1 heterodimer is involved in the export of HSP70 mRNA in conjunction with ALYREF/THOC4 and THOC5. This Bos taurus (Bovine) protein is NTF2-related export protein 1 (NXT1).